Here is a 231-residue protein sequence, read N- to C-terminus: MPKHGKKYLEAAKKVDKTKLYEPAEAFSLVKELSFAKFDETVEVAVKLGVDPRHADQQVRGAVVLPHGTGKTRKVLVFAKGEKAKEAEAAGADYVGAEEYIEKIAQGWIDFDVVVATPDMMGAVGRLGKILGPKGLMPSPKTGTVTFEVAKAIAEIKAGKIEYRVDKAGIVHVPIGKVSFPVEKLVENFNTLMDALIKAKPAGAKGQYLKGVTVSSTMGPGIKINHLKLVK.

It belongs to the universal ribosomal protein uL1 family. Part of the 50S ribosomal subunit.

In terms of biological role, binds directly to 23S rRNA. The L1 stalk is quite mobile in the ribosome, and is involved in E site tRNA release. Protein L1 is also a translational repressor protein, it controls the translation of the L11 operon by binding to its mRNA. The protein is Large ribosomal subunit protein uL1 of Carboxydothermus hydrogenoformans (strain ATCC BAA-161 / DSM 6008 / Z-2901).